The following is a 152-amino-acid chain: Transcriptional repressor NrdR (152 aa).

A zinc finger lies at cysteine 3–cysteine 34. Positions isoleucine 49–lysine 139 constitute an ATP-cone domain.

It belongs to the NrdR family. Requires Zn(2+) as cofactor.

Its function is as follows. Negatively regulates transcription of bacterial ribonucleotide reductase nrd genes and operons by binding to NrdR-boxes. The polypeptide is Transcriptional repressor NrdR (Roseiflexus sp. (strain RS-1)).